Here is a 485-residue protein sequence, read N- to C-terminus: Proline--tRNA ligase (485 aa).

It belongs to the class-II aminoacyl-tRNA synthetase family. ProS type 3 subfamily. Homodimer.

Its subcellular location is the cytoplasm. The enzyme catalyses tRNA(Pro) + L-proline + ATP = L-prolyl-tRNA(Pro) + AMP + diphosphate. In terms of biological role, catalyzes the attachment of proline to tRNA(Pro) in a two-step reaction: proline is first activated by ATP to form Pro-AMP and then transferred to the acceptor end of tRNA(Pro). The protein is Proline--tRNA ligase of Methanopyrus kandleri (strain AV19 / DSM 6324 / JCM 9639 / NBRC 100938).